The chain runs to 542 residues: Prolyl 4-hydroxylase subunit alpha-3 (542 aa).

Residues 1-24 form the signal peptide; the sequence is MGPGARLALLALLALGGDPAAATG. Residues 105–129 are a coiled coil; sequence LEATENIRALKDGYEKVEQDLPAFE. The TPR repeat unit spans residues 225 to 258; the sequence is EDALDYLAFACFQVGNVSCALSLSREFLVYSPDN. The N-linked (GlcNAc...) asparagine glycan is linked to asparagine 240. In terms of domain architecture, Fe2OG dioxygenase spans 420–527; it reads YAEYLQVVNY…KWVANKWIHE (108 aa). Residues histidine 438 and aspartate 440 each coordinate Fe cation. Asparagine 480 carries an N-linked (GlcNAc...) asparagine glycan. Residue histidine 508 participates in Fe cation binding. Lysine 518 contacts 2-oxoglutarate.

This sequence belongs to the P4HA family. Heterotetramer of two alpha-3 chains and two beta chains (the beta chain is the multi-functional PDI). It depends on Fe(2+) as a cofactor. L-ascorbate is required as a cofactor. Post-translationally, N-glycosylation plays no role in the catalytic activity.

It is found in the endoplasmic reticulum lumen. The enzyme catalyses L-prolyl-[collagen] + 2-oxoglutarate + O2 = trans-4-hydroxy-L-prolyl-[collagen] + succinate + CO2. Functionally, catalyzes the post-translational formation of 4-hydroxyproline in -Xaa-Pro-Gly- sequences in collagens and other proteins. This chain is Prolyl 4-hydroxylase subunit alpha-3 (P4ha3), found in Mus musculus (Mouse).